A 398-amino-acid polypeptide reads, in one-letter code: Acetate kinase (398 aa).

N7 contacts Mg(2+). Residue K14 participates in ATP binding. R91 contacts substrate. The active-site Proton donor/acceptor is the D148. ATP is bound by residues 208–212, 283–285, and 331–335; these read HLGNG, DFR, and GIGEH. A Mg(2+)-binding site is contributed by E386.

This sequence belongs to the acetokinase family. In terms of assembly, homodimer. Mg(2+) is required as a cofactor. Requires Mn(2+) as cofactor.

The protein localises to the cytoplasm. The catalysed reaction is acetate + ATP = acetyl phosphate + ADP. It participates in metabolic intermediate biosynthesis; acetyl-CoA biosynthesis; acetyl-CoA from acetate: step 1/2. Functionally, catalyzes the formation of acetyl phosphate from acetate and ATP. Can also catalyze the reverse reaction. The sequence is that of Acetate kinase from Clostridium botulinum (strain Eklund 17B / Type B).